We begin with the raw amino-acid sequence, 75 residues long: Putative membrane protein insertion efficiency factor (75 aa).

It belongs to the UPF0161 family.

It localises to the cell inner membrane. Its function is as follows. Could be involved in insertion of integral membrane proteins into the membrane. This Gloeothece citriformis (strain PCC 7424) (Cyanothece sp. (strain PCC 7424)) protein is Putative membrane protein insertion efficiency factor.